The sequence spans 199 residues: MKFSPLVDELIQSLRCLPGVGPKSAQRMAFQLLERDRKAGAKLADSLAKAMSEVGHCQSCRTFTEETYCPICVSTKRGHSEVICVVETPADVLAIEAGGHFSGRYFVLLGHLSPLDGVGPDELGLDLLEQHLATGDVSELILATNPTVEGDATAHYIADMAKRHQLTVSRIAHGVPVGGELEYVDSTTLALSFNGRLPM.

A C4-type zinc finger spans residues 57 to 72 (CQSCRTFTEETYCPIC). In terms of domain architecture, Toprim spans 81 to 176 (EVICVVETPA…TVSRIAHGVP (96 aa)).

This sequence belongs to the RecR family.

May play a role in DNA repair. It seems to be involved in an RecBC-independent recombinational process of DNA repair. It may act with RecF and RecO. The sequence is that of Recombination protein RecR from Shewanella pealeana (strain ATCC 700345 / ANG-SQ1).